We begin with the raw amino-acid sequence, 2039 residues long: Methylcytosine dioxygenase TET1 (2039 aa).

Residues 1-19 (MSRSRPAKPSKSVKTKLQK) are compositionally biased toward basic residues. 3 disordered regions span residues 1-79 (MSRS…AGAA), 119-168 (VVTP…NGEQ), and 227-286 (DNEC…GFPD). Basic and acidic residues-rich tracts occupy residues 53–65 (KRRD…EDKT) and 138–149 (IQDEPGVKHSEN). 2 stretches are compositionally biased toward polar residues: residues 150 to 168 (DSVP…NGEQ) and 241 to 265 (QRST…SQVE). A sufficient for binding to genomic CpG islands region spans residues 512-657 (LDLTQGSQAA…NGPKSESMDC (146 aa)). The CXXC-type zinc-finger motif lies at 567–608 (ERRKRKACGVCEPCQQKANCGECTYCKNRKNSHQICKKRKCE). Cys-574, Cys-577, Cys-580, Cys-586, Cys-589, Cys-592, Cys-602, and Cys-607 together coordinate Zn(2+). 8 disordered regions span residues 613–670 (KPEA…QRLD), 711–735 (CDAN…NPSP), 820–859 (GAEP…VQPS), 882–906 (QLSE…HQKT), 964–993 (QGYP…SHPL), 1050–1129 (VRNA…KKQE), 1209–1240 (VEPS…QGQP), and 1322–1341 (KREA…DSAQ). The span at 653 to 670 (ESMDCSRRGHGEEEQRLD) shows a compositional bias: basic and acidic residues. Residues 825-835 (IFNNHPNTHSA) are compositionally biased toward polar residues. The span at 840-852 (HPPEKVPNKEPKD) shows a compositional bias: basic and acidic residues. Ser-854 carries the post-translational modification Phosphoserine. Positions 884-894 (SEAPSESSSPS) are enriched in low complexity. Basic and acidic residues predominate over residues 895 to 904 (KPEKDEEAHQ). Residues 1053–1064 (AESTPESLVAKN) are compositionally biased toward polar residues. The span at 1094–1116 (KPKKAQKKARATPHANKRKKKPP) shows a compositional bias: basic residues. 2 stretches are compositionally biased toward polar residues: residues 1214–1227 (SLPT…SGGQ) and 1326–1341 (QTSS…DSAQ). The Zn(2+) site is built by Cys-1371, Cys-1373, Cys-1430, His-1456, and Cys-1458. Arg-1499 contributes to the 2-oxoglutarate binding site. Positions 1509, 1511, 1527, and 1536 each coordinate Zn(2+). Residues 1528–1541 (SWSMYFNGCKFGRS) are interaction with DNA. A Glycyl lysine isopeptide (Lys-Gly) (interchain with G-Cter in ubiquitin) cross-link involves residue Lys-1537. Cys-1628 provides a ligand contact to Zn(2+). Cys-1644 serves as a coordination point for 2-oxoglutarate. His-1650 lines the Zn(2+) pocket. The Fe cation site is built by His-1652 and Asp-1654. Residue Asn-1657 coordinates substrate. His-1685 contacts 2-oxoglutarate. The span at 1734–1743 (GKRAKMKQNH) shows a compositional bias: basic residues. Disordered stretches follow at residues 1734-1760 (GKRA…ASST) and 1830-1901 (AAHP…LPQL). Residues 1748–1760 (SHNTKSFSSASST) are compositionally biased toward low complexity. Residues 1850–1875 (TSPSEQLTSNQSNQQLPLLSNSQKLA) show a composition bias toward polar residues. The span at 1880–1895 (EDERHPEADEPQHPED) shows a compositional bias: basic and acidic residues. His-1939 is a Fe cation binding site. 1954-1956 (RVS) provides a ligand contact to 2-oxoglutarate. Residue 1960–1962 (YQH) participates in substrate binding. His-1970 is a Zn(2+) binding site.

Belongs to the TET family. As to quaternary structure, interacts with SIN3A; recruits the transcriptional co-repressor SIN3A to gene promoters. Interacts with HCFC1. Interacts (via C-terminus) with OGT. Found in a complex composed of at least SINHCAF, SIN3A, HDAC1, SAP30, RBBP4, OGT and TET1. Interacts with QSER1. Interacts with NONO (via DNA-binding domain); this interaction recruits TET1 to genomic loci. Interacts with FOXA2; this interaction may recruit TET1 to specific enhancers to preserve their unmethylated status and hence allowing gene expression. Interacts with RNF2. Directly interacts (via C-terminus) with the DCAF1 component of the CRL4(VprBP) E3 ubiquitin-protein ligase complex. In terms of assembly, interacts with UHRF1; this interaction induces the recruitment of TET1 to replicating heterochromatin. Interacts with DCAF1. It depends on Fe(2+) as a cofactor. Zn(2+) serves as cofactor. Post-translationally, glycosylated. Interaction with OGT leads to GlcNAcylation. Monoubiquitinated by the DCX (DDB1-CUL4-X-box) E3 ubiquitin-protein ligase complex called CRL4(VprBP) or CUL4A-RBX1-DDB1-DCAF1/VPRBP complex. In terms of processing, monoubiquitinated by the DCX (DDB1-CUL4-X-box) E3 ubiquitin-protein ligase complex called CRL4(VprBP) or CUL4A-RBX1-DDB1-DCAF1/VPRBP complex; this modification promotes binding to DNA. Expressed in germinal vesicle (GV) stage and MII-stage oocytes and in early embryos. Also detected somatic tissues, including brain, liver and kidney, but at very low levels. As to expression, predominantly expressed in early embryos. Also expressed in embryonic stem cells and in primordial germ cells. Expressed in adult tissues, including brain cortex, cerebellum, heart, kidney, liver, muscle and spleen, although at much lower levels than isoform 2. In the brain, expressed at higher levels in glial cells than in neurons. Expressed in placenta. Expressed in the pituitary, most probably in thyrotropes. In terms of tissue distribution, preferentially expressed in differentiated cells, including in cerebral cortex, cerebellum and thymus. Also expressed in heart, kidney, liver, muscle and spleen at much higher levels than isoform 1. In the brain, expressed at higher levels in neurons than in glial cells. Expressed in the olfactory bulb and in the mammary gland.

It is found in the nucleus. It localises to the chromosome. The catalysed reaction is a 5-methyl-2'-deoxycytidine in DNA + 2-oxoglutarate + O2 = a 5-hydroxymethyl-2'-deoxycytidine in DNA + succinate + CO2. It catalyses the reaction a 5-hydroxymethyl-2'-deoxycytidine in DNA + 2-oxoglutarate + O2 = a 5-formyl-2'-deoxycytidine in DNA + succinate + CO2 + H2O. The enzyme catalyses a 5-formyl-2'-deoxycytidine in DNA + 2-oxoglutarate + O2 = a 5-carboxyl-2'-deoxycytidine in DNA + succinate + CO2 + H(+). Its function is as follows. Dioxygenase that plays a key role in active DNA demethylation, by catalyzing the sequential oxidation of the modified genomic base 5-methylcytosine (5mC) into 5-hydroxymethylcytosine (5hmC), 5-formylcytosine (5fC), and 5-carboxylcytosine (5caC). In addition to its role in DNA demethylation, plays a more general role in chromatin regulation by recruiting histone modifying protein complexes to alter histone marks and chromatin accessibility, leading to both activation and repression of gene expression. Plays therefore a role in many biological processes, including stem cell maintenance, T- and B-cell development, inflammation regulation, iron homeostasis, neural activity or DNA repair. Involved in the balance between pluripotency and lineage commitment of cells it plays a role in embryonic stem cells maintenance and inner cell mass cell specification. Together with QSER1, plays an essential role in the protection and maintenance of transcriptional and developmental programs to inhibit the binding of DNMT3A/3B and therefore de novo methylation. May play a role in the pancreatic beta-cell specification during development. In this context, may function as an upstream epigenetic regulator of PAX4 presumably through direct recruitment by FOXA2 to a PAX4 enhancer to preserve its unmethylated status, thereby potentiating PAX4 expression to adopt beta-cell fate during endocrine lineage commitment. Under DNA hypomethylation conditions, such as in female meiotic germ cells, may induce epigenetic reprogramming of pericentromeric heterochromatin (PCH), the constitutive heterochromatin of pericentromeric regions. PCH forms chromocenters in the interphase nucleus and chromocenters cluster at the prophase of meiosis. In this context, may also be essential for chromocenter clustering in a catalytic activity-independent manner, possibly through the recruitment polycomb repressive complex 1 (PRC1) to the chromocenters. During embryonic development, may be required for normal meiotic progression in oocytes and meiotic gene activation. Binds preferentially to DNA containing cytidine-phosphate-guanosine (CpG) dinucleotides over CpH (H=A, T, and C), hemimethylated-CpG and hemimethylated-hydroxymethyl-CpG. Dioxygenase that plays a key role in active DNA demethylation. Binds to promoters, particularly to those with high CG content. In hippocampal neurons, isoform 1 regulates the expression of a unique subset of genes compared to isoform 2, although some overlap between both isoforms, hence differentially regulates excitatory synaptic transmission. In hippocampal neuron cell cultures, isoform 1 controls both miniature excitatory postsynaptic current amplitude and frequency. Isoform 1 may regulate genes involved in hippocampal-dependent memory, leading to positive regulation of memory, contrary to isoform 2 that may decrease memory. In terms of biological role, dioxygenase that plays a key role in active DNA demethylation. As isoform 1, binds to promoters, particularly to those with high CG content, however displays reduced global chromatin affinity compared with isoform 1, leading to decreased global DNA demethylation compared with isoform 1. Contrary to isoform 1, isoform 2 localizes during S phase to sites of ongoing DNA replication in heterochromatin, causing a significant de novo 5hmC formation, globally, and more so in heterochromatin, including LINE 1 interspersed DNA repeats leading to their activation. In hippocampal neurons, isoform 2 regulates the expression of a unique subset of genes compared with isoform 1, although some overlap between both isoforms, hence differentially regulating excitatory synaptic transmission. In hippocampal neuron cell cultures, isoform 2 controls miniature excitatory postsynaptic current frequency, but not amplitude. Isoform 2 may regulate genes involved in hippocampal-dependent memory, leading to negative regulation of memory, contrary to isoform 1 that may improve memory. In immature and partially differentiated gonadotrope cells, represses luteinizing hormone gene LHB expression directly and does not catalyze 5hmC at the gene promoter. In Mus musculus (Mouse), this protein is Methylcytosine dioxygenase TET1 (Tet1).